The primary structure comprises 218 residues: Tubulin polymerization-promoting protein (218 aa).

The segment at methionine 1 to glutamate 46 is disordered. Residues methionine 1–phenylalanine 115 are mediates interaction with LIMK1. Threonine 15 is subject to Phosphothreonine. Phosphoserine occurs at positions 19, 31, and 34. The residue at position 42 (threonine 42) is a Phosphothreonine. Positions 60, 71, 79, and 82 each coordinate Zn(2+). Threonine 91 is modified (phosphothreonine). Position 106 is a phosphoserine (serine 106). O-linked (GlcNAc) serine glycosylation is present at serine 151. Residues serine 158 and serine 159 each carry the phosphoserine modification. Positions threonine 166–valine 192 are disordered. Positions serine 174–glycine 183 are enriched in basic and acidic residues.

It belongs to the TPPP family. In terms of assembly, homodimer. Binds tubulin; binding is inhibited by GTP. Interacts with MAPK1. Interacts with GAPDH; the interaction is direct. Interacts with LIMK1 (via the PDZ domain); the interaction is direct. Interacts with LIMK2. Interacts with HDAC6; thereby inhibiting the tubulin deacetylase activity of HDAC6. Interacts with aggregated SNCA; may have a pro-aggregatory role in synucleinopathies. Interacts with DYNLL1. Interacts (via C-terminus) with S100A2, S100A6 and S100B; these interactions inhibit TPPP dimerization. It depends on Mg(2+) as a cofactor. Phosphorylated by LIMK1 on serine residues; phosphorylation may alter the tubulin polymerization activity. Phosphorylation by LIMK2, but not LIMK1, regulates astral microtubule organization at early stage of mitosis. Phosphorylation by ROCK1 at Ser-31, Ser-106 and Ser-158 inhibits interaction with HDAC6, resulting in decreased acetylation of tubulin, increased cell motility and entry into S-phase. Phosphorylation by CDK1 inhibits the microtubule polymerizing activity. In terms of processing, degraded by the proteasome; zinc-binding inhibits degradation by the proteasome. In terms of tissue distribution, widely expressed with higher expression in brain (at protein level).

It localises to the golgi outpost. Its subcellular location is the cytoplasm. The protein localises to the cytoskeleton. The protein resides in the microtubule organizing center. It is found in the nucleus. It localises to the spindle. It catalyses the reaction GTP + H2O = GDP + phosphate + H(+). Regulator of microtubule dynamics that plays a key role in myelination by promoting elongation of the myelin sheath. Acts as a microtubule nucleation factor in oligodendrocytes: specifically localizes to the postsynaptic Golgi apparatus region, also named Golgi outpost, and promotes microtubule nucleation, an important step for elongation of the myelin sheath. Required for both uniform polarized growth of distal microtubules as well as directing the branching of proximal processes. Shows magnesium-dependent GTPase activity; the role of the GTPase activity is unclear. In addition to microtubule nucleation activity, also involved in microtubule bundling and stabilization of existing microtubules, thereby maintaining the integrity of the microtubule network. Regulates microtubule dynamics by promoting tubulin acetylation: acts by inhibiting the tubulin deacetylase activity of HDAC6. Also regulates cell migration: phosphorylation by ROCK1 inhibits interaction with HDAC6, resulting in decreased acetylation of tubulin and increased cell motility. Plays a role in cell proliferation by regulating the G1/S-phase transition. Involved in astral microtubule organization and mitotic spindle orientation during early stage of mitosis; this process is regulated by phosphorylation by LIMK2. In Mus musculus (Mouse), this protein is Tubulin polymerization-promoting protein.